The chain runs to 383 residues: Chaperone protein DnaJ (383 aa).

A J domain is found at 5–70; sequence DYYELLGVSR…QKRAAYDRFG (66 aa). The CR-type zinc-finger motif lies at 140 to 219; that stretch reads GTKTEIRVPT…CSGAGTVPRE (80 aa). Residues cysteine 153, cysteine 156, cysteine 171, cysteine 174, cysteine 193, cysteine 196, cysteine 207, and cysteine 210 each coordinate Zn(2+). CXXCXGXG motif repeat units lie at residues 153 to 160, 171 to 178, 193 to 200, and 207 to 214; these read CDACSGTG, CPTCGGAG, and CRVCSGAG.

This sequence belongs to the DnaJ family. As to quaternary structure, homodimer. Zn(2+) is required as a cofactor.

The protein localises to the cytoplasm. In terms of biological role, participates actively in the response to hyperosmotic and heat shock by preventing the aggregation of stress-denatured proteins and by disaggregating proteins, also in an autonomous, DnaK-independent fashion. Unfolded proteins bind initially to DnaJ; upon interaction with the DnaJ-bound protein, DnaK hydrolyzes its bound ATP, resulting in the formation of a stable complex. GrpE releases ADP from DnaK; ATP binding to DnaK triggers the release of the substrate protein, thus completing the reaction cycle. Several rounds of ATP-dependent interactions between DnaJ, DnaK and GrpE are required for fully efficient folding. Also involved, together with DnaK and GrpE, in the DNA replication of plasmids through activation of initiation proteins. The protein is Chaperone protein DnaJ of Acidiphilium cryptum (strain JF-5).